A 193-amino-acid chain; its full sequence is uncharacterized protein (193 aa).

A signal peptide spans 1 to 22 (MAVQKNVIKGILAGTFALMLSG). Cys23 carries N-palmitoyl cysteine lipidation. The S-diacylglycerol cysteine moiety is linked to residue Cys23.

The protein localises to the cell membrane. This is an uncharacterized protein from Escherichia coli (strain K12).